A 254-amino-acid chain; its full sequence is Geranylgeranylglyceryl phosphate synthase (254 aa).

Residues Asp-28 and Ser-53 each coordinate Mg(2+). Sn-glycerol 1-phosphate is bound by residues 172–178 (YLEAGSG), 203–204 (GG), and 225–226 (GT).

The protein belongs to the GGGP/HepGP synthase family. Group II subfamily. It depends on Mg(2+) as a cofactor.

It localises to the cytoplasm. The enzyme catalyses sn-glycerol 1-phosphate + (2E,6E,10E)-geranylgeranyl diphosphate = sn-3-O-(geranylgeranyl)glycerol 1-phosphate + diphosphate. It functions in the pathway membrane lipid metabolism; glycerophospholipid metabolism. Functionally, prenyltransferase that catalyzes the transfer of the geranylgeranyl moiety of geranylgeranyl diphosphate (GGPP) to the C3 hydroxyl of sn-glycerol-1-phosphate (G1P). This reaction is the first ether-bond-formation step in the biosynthesis of archaeal membrane lipids. This Methanococcus vannielii (strain ATCC 35089 / DSM 1224 / JCM 13029 / OCM 148 / SB) protein is Geranylgeranylglyceryl phosphate synthase.